The chain runs to 109 residues: Nucleoid-associated protein BUsg_467 (109 aa).

It belongs to the YbaB/EbfC family. Homodimer.

It localises to the cytoplasm. It is found in the nucleoid. Functionally, binds to DNA and alters its conformation. May be involved in regulation of gene expression, nucleoid organization and DNA protection. This chain is Nucleoid-associated protein BUsg_467, found in Buchnera aphidicola subsp. Schizaphis graminum (strain Sg).